Consider the following 316-residue polypeptide: Transaldolase 1 (316 aa).

The active-site Schiff-base intermediate with substrate is lysine 131.

It belongs to the transaldolase family. Type 1 subfamily. In terms of assembly, homodimer.

Its subcellular location is the cytoplasm. The catalysed reaction is D-sedoheptulose 7-phosphate + D-glyceraldehyde 3-phosphate = D-erythrose 4-phosphate + beta-D-fructose 6-phosphate. Its pathway is carbohydrate degradation; pentose phosphate pathway; D-glyceraldehyde 3-phosphate and beta-D-fructose 6-phosphate from D-ribose 5-phosphate and D-xylulose 5-phosphate (non-oxidative stage): step 2/3. Functionally, transaldolase is important for the balance of metabolites in the pentose-phosphate pathway. This is Transaldolase 1 from Pectobacterium atrosepticum (strain SCRI 1043 / ATCC BAA-672) (Erwinia carotovora subsp. atroseptica).